The sequence spans 156 residues: SsrA-binding protein (156 aa).

This sequence belongs to the SmpB family.

Its subcellular location is the cytoplasm. Required for rescue of stalled ribosomes mediated by trans-translation. Binds to transfer-messenger RNA (tmRNA), required for stable association of tmRNA with ribosomes. tmRNA and SmpB together mimic tRNA shape, replacing the anticodon stem-loop with SmpB. tmRNA is encoded by the ssrA gene; the 2 termini fold to resemble tRNA(Ala) and it encodes a 'tag peptide', a short internal open reading frame. During trans-translation Ala-aminoacylated tmRNA acts like a tRNA, entering the A-site of stalled ribosomes, displacing the stalled mRNA. The ribosome then switches to translate the ORF on the tmRNA; the nascent peptide is terminated with the 'tag peptide' encoded by the tmRNA and targeted for degradation. The ribosome is freed to recommence translation, which seems to be the essential function of trans-translation. This is SsrA-binding protein from Clostridium beijerinckii (strain ATCC 51743 / NCIMB 8052) (Clostridium acetobutylicum).